Reading from the N-terminus, the 464-residue chain is Serine/threonine-protein kinase 38-like (464 aa).

Position 2 is an N-acetylalanine (Ala-2). The S100B binding stretch occupies residues Lys-64–Asp-89. Phosphothreonine is present on Thr-75. The Protein kinase domain maps to Phe-90–Phe-383. Residues Ile-96–Val-104 and Lys-119 each bind ATP. Asp-213 serves as the catalytic Proton acceptor. Ser-282 is modified (phosphoserine; by autocatalysis). Residues Glu-384–Gly-453 enclose the AGC-kinase C-terminal domain. Phosphothreonine; by STK24/MST3 is present on Thr-442.

Belongs to the protein kinase superfamily. AGC Ser/Thr protein kinase family. As to quaternary structure, homodimeric S100B binds two molecules of STK38L. Interacts with MOB1 and MOB2. Interacts with MICAL1; leading to inhibit the protein kinase activity by antagonizing activation by MST1/STK4. Mg(2+) is required as a cofactor. Highly expressed in the large and small intestine, stomach and testis. High levels also present in the brain, in particular the neurocortex, basal forebrain, hippocampus, the amygdala, cerebellum and brainstem.

The protein resides in the cytoplasm. It is found in the cytoskeleton. It localises to the membrane. The enzyme catalyses L-seryl-[protein] + ATP = O-phospho-L-seryl-[protein] + ADP + H(+). It catalyses the reaction L-threonyl-[protein] + ATP = O-phospho-L-threonyl-[protein] + ADP + H(+). Activated by binding of S100B which releases autoinhibitory N-lobe interactions, enabling ATP to bind and the autophosphorylation of Ser-282. Thr-442 then undergoes calcium-dependent phosphorylation by STK24/MST3. Interactions between phosphorylated Thr-442 and the N-lobe promote additional structural changes that complete the activation of the kinase. Autoinhibition is also released by the binding of MOB1/MOBKL1A and MOB2 to the N-terminal of STK38L. In terms of biological role, involved in the regulation of structural processes in differentiating and mature neuronal cells. This Mus musculus (Mouse) protein is Serine/threonine-protein kinase 38-like.